The chain runs to 468 residues: Beta-monoglucosyldiacylglycerol synthase (468 aa).

A run of 4 helical transmembrane segments spans residues 51–71 (AALV…VSWG), 72–92 (SIFI…VVFA), 361–381 (FMLT…MAVV), and 387–407 (MLGP…FAGL).

The protein belongs to the glycosyltransferase 2 family. It depends on Mg(2+) as a cofactor.

Its subcellular location is the membrane. The catalysed reaction is a 1,2-diacyl-sn-glycerol + UDP-alpha-D-glucose = a 1,2-diacyl-3-O-(beta-D-glucopyranosyl)-sn-glycerol + UDP + H(+). Glucosyltransferase involved in the biosynthesis of the non-bilayer-forming membrane lipid beta-monoglucosyldiacylglycerol which contributes to regulate the properties and stability of the membrane. Catalyzes the transfer of a glucosyl residue from UDP-Glc to diacylglycerol (DAG) acceptor to form the corresponding beta-glucosyl-DAG (1,2-diacyl-3-O-(beta-D-glucopyranosyl)-sn-glycerol). It can only use UDP-Glc as sugar donor. The protein is Beta-monoglucosyldiacylglycerol synthase of Trichormus variabilis (strain ATCC 29413 / PCC 7937) (Anabaena variabilis).